A 124-amino-acid polypeptide reads, in one-letter code: MSERALRGTRLVVTSYETDRGIDLAPRQAVEYACEKGHRFEMPFSVEAEIPPEWECKVCGAQALLVDGDGPEEKKAKPARTHWDMLMERRTREELEEVLEERLAVLRSGAMNIAVHPRDSRKSA.

Positions 34, 38, 56, and 59 each coordinate Zn(2+). Residues 73–124 (EKKAKPARTHWDMLMERRTREELEEVLEERLAVLRSGAMNIAVHPRDSRKSA) are sufficient for interaction with HrdB (SigA).

It belongs to the RNA polymerase-binding protein RbpA family. As to quaternary structure, homodimer. Forms a complex with the RNAP, and a complex with RNAP plus principal sigma factor HrdB associated with promoter. Binds to free principal sigma factors HrdB and HrdA, probably via the sigma-2 domain, but not to 6 other sigma factors tested. Zn(2+) serves as cofactor.

In terms of biological role, binds to RNA polymerase (RNAP), stimulating transcription from principal, but not alternative sigma factor promoters. Stimulates transcription from several principal sigma factor HrdB (SigA)-dependent promoters but not from a SigR-dependent promoter. Stimulation occurs in the presence of the transcription initiation inhibitor rifampicin (Rif). This Streptomyces coelicolor (strain ATCC BAA-471 / A3(2) / M145) protein is RNA polymerase-binding protein RbpA.